Reading from the N-terminus, the 109-residue chain is Small ribosomal subunit protein uS17 (109 aa).

Belongs to the universal ribosomal protein uS17 family. Part of the 30S ribosomal subunit.

Its function is as follows. One of the primary rRNA binding proteins, it binds specifically to the 5'-end of 16S ribosomal RNA. The polypeptide is Small ribosomal subunit protein uS17 (Methanosarcina mazei (strain ATCC BAA-159 / DSM 3647 / Goe1 / Go1 / JCM 11833 / OCM 88) (Methanosarcina frisia)).